A 196-amino-acid polypeptide reads, in one-letter code: MKTIEIIGYRRANLGKQASKQLRNDAQVPGVLYGGKEQVHFYTPMAILKDLVYTPQAYFVTLNLEGAIYNCILQDIQFHPVNEVILHIDLLQIFEDKQIKMDIPIVLVGDAPGVVKGGNLVHKKKKLSVVAYPKDMPDTIPVDISGLDVGQMTRVSHIKAENYTILAVPGTPVAVVETTRALRAGAAEAEGKGKKK.

The protein belongs to the bacterial ribosomal protein bL25 family. CTC subfamily. As to quaternary structure, part of the 50S ribosomal subunit; part of the 5S rRNA/L5/L18/L25 subcomplex. Contacts the 5S rRNA. Binds to the 5S rRNA independently of L5 and L18.

Its function is as follows. This is one of the proteins that binds to the 5S RNA in the ribosome where it forms part of the central protuberance. This chain is Large ribosomal subunit protein bL25, found in Amoebophilus asiaticus (strain 5a2).